The following is a 531-amino-acid chain: Zinc finger protein 703-B (531 aa).

Positions 1 to 10 are enriched in polar residues; the sequence is MNCSPPGSCT. Disordered regions lie at residues 1 to 28, 88 to 249, and 295 to 318; these read MNCS…ATLA, SQIG…VAPI, and VGNQ…LTGA. Low complexity-rich tracts occupy residues 19-28 and 113-122; these read TPATPCATLA and RSSSLKLGES. Residues 171–180 are compositionally biased toward polar residues; it reads SPSSRVSSPG. The span at 183–198 shows a compositional bias: basic and acidic residues; that stretch reads CESKNNESQEKKEPEV. The span at 199–215 shows a compositional bias: polar residues; sequence NKSSLETSQANPTLTRA. Over residues 216-227 the composition is skewed to low complexity; that stretch reads SISNSSAESSQS. A C2H2-type zinc finger spans residues 404 to 432; the sequence is HICNWVSASGPCDKRFATSEELLAHLRTH.

The protein belongs to the Elbow/Noc family.

Its subcellular location is the nucleus. It is found in the cytoplasm. In terms of biological role, transcriptional corepressor which does not bind directly to DNA and may regulate transcription through recruitment of histone deacetylases to gene promoters. Regulates cell adhesion, migration and proliferation. Involved in specification of the lateral neural plate border (NPB). May be required for segmental gene expression during hindbrain development. This Xenopus laevis (African clawed frog) protein is Zinc finger protein 703-B (znf703-b).